We begin with the raw amino-acid sequence, 283 residues long: Pantothenate synthetase (283 aa).

30 to 37 (MGNLHAGH) provides a ligand contact to ATP. The active-site Proton donor is the histidine 37. A (R)-pantoate-binding site is contributed by glutamine 61. A beta-alanine-binding site is contributed by glutamine 61. 149-152 (GEKD) is an ATP binding site. Glutamine 155 contributes to the (R)-pantoate binding site. Residues valine 178 and 186–189 (LSSR) contribute to the ATP site.

It belongs to the pantothenate synthetase family. In terms of assembly, homodimer.

The protein localises to the cytoplasm. It catalyses the reaction (R)-pantoate + beta-alanine + ATP = (R)-pantothenate + AMP + diphosphate + H(+). The protein operates within cofactor biosynthesis; (R)-pantothenate biosynthesis; (R)-pantothenate from (R)-pantoate and beta-alanine: step 1/1. Its function is as follows. Catalyzes the condensation of pantoate with beta-alanine in an ATP-dependent reaction via a pantoyl-adenylate intermediate. In Azotobacter vinelandii (strain DJ / ATCC BAA-1303), this protein is Pantothenate synthetase.